The primary structure comprises 84 residues: Beta-toxin Tf1a (84 aa).

Positions 1-20 (MKGMILFISCLLLIGIVVEC) are cleaved as a signal peptide. One can recognise an LCN-type CS-alpha/beta domain in the interval 21–82 (KEGYLMDHEG…VWERATNRCG (62 aa)). Disulfide bonds link Cys-31–Cys-81, Cys-35–Cys-57, Cys-43–Cys-62, and Cys-47–Cys-64. Cys-81 carries the post-translational modification Cysteine amide.

The protein belongs to the long (4 C-C) scorpion toxin superfamily. Sodium channel inhibitor family. Beta subfamily. In terms of tissue distribution, expressed by the venom gland.

The protein resides in the secreted. In terms of biological role, beta toxins bind voltage-independently at site-4 of sodium channels (Nav) and shift the voltage of activation toward more negative potentials thereby affecting sodium channel activation and promoting spontaneous and repetitive firing. The toxin induces a leftward shift, on all channels tested (including Blattella germanica and Varroa destructor Nav1), displacing a change in voltage dependence activation to more hyperpolarized potentials. In addition, the toxin mostly inhibits peak current of hNav1.4/SCN4A (53% inhibition of peak current at 100 nM) and hNav1.5/SCN5A (71% inhibition). The polypeptide is Beta-toxin Tf1a (Tityus fasciolatus (Central Brazilian scorpion)).